A 465-amino-acid polypeptide reads, in one-letter code: Cysteine--tRNA ligase (465 aa).

Zn(2+) is bound at residue cysteine 30. The short motif at 32-42 (ITVYDYCHIGH) is the 'HIGH' region element. Zn(2+) contacts are provided by cysteine 214, histidine 239, and glutamate 243. A 'KMSKS' region motif is present at residues 271–275 (KMSKS). Lysine 274 serves as a coordination point for ATP.

This sequence belongs to the class-I aminoacyl-tRNA synthetase family. Monomer. The cofactor is Zn(2+).

Its subcellular location is the cytoplasm. It carries out the reaction tRNA(Cys) + L-cysteine + ATP = L-cysteinyl-tRNA(Cys) + AMP + diphosphate. The chain is Cysteine--tRNA ligase from Burkholderia thailandensis (strain ATCC 700388 / DSM 13276 / CCUG 48851 / CIP 106301 / E264).